The sequence spans 530 residues: Feruloyl esterase C (530 aa).

The signal sequence occupies residues 1–25; it reads MMLTSAILLLTLGVQLSHADDSSRE. Intrachain disulfides connect C31–C78, C66–C117, C190–C444, C259–C276, C285–C294, and C506–C528. The Acyl-ester intermediate role is filled by S191. Residues D260, D263, A265, D267, and V269 each contribute to the Ca(2+) site. Catalysis depends on charge relay system residues D403 and H443.

Belongs to the tannase family.

The protein resides in the secreted. The enzyme catalyses feruloyl-polysaccharide + H2O = ferulate + polysaccharide.. In terms of biological role, involved in degradation of plant cell walls. Hydrolyzes the feruloyl-arabinose ester bond in arabinoxylans as well as the feruloyl-galactose and feruloyl-arabinose ester bonds in pectin. Active against methyl esters of sinapate (MSA) and caffeate (MCA). The sequence is that of Feruloyl esterase C (faeC) from Talaromyces stipitatus (strain ATCC 10500 / CBS 375.48 / QM 6759 / NRRL 1006) (Penicillium stipitatum).